Here is a 1375-residue protein sequence, read N- to C-terminus: BNI1-related protein 1 (1375 aa).

The GBD/FH3 domain occupies Cys94–Thr490. Residues Gln520–Gln601 adopt a coiled-coil conformation. The residue at position 621 (Ser621) is a Phosphoserine. Residues Ser659 to Pro851 enclose the FH1 domain. The disordered stretch occupies residues Tyr661–Phe684. Residue Ser751 is modified to Phosphoserine. Disordered stretches follow at residues Lys764–Leu785, Ala817–Asn839, and Lys1285–Val1309. 2 stretches are compositionally biased toward pro residues: residues Gln767–Pro781 and Val818–Pro828. The region spanning Asp868–Met1290 is the FH2 domain. Residues Asp1302 to Ser1336 enclose the DAD domain.

The protein belongs to the formin homology family. BNI1 subfamily. Interacts with profilin at the FH1 domain.

In terms of biological role, may organize microtubules by mediating spindle positioning and movement in the budding process. Potential target of the RHO family members. The polypeptide is BNI1-related protein 1 (BNR1) (Saccharomyces cerevisiae (strain ATCC 204508 / S288c) (Baker's yeast)).